Reading from the N-terminus, the 486-residue chain is Serine/threonine-protein kinase 32C (486 aa).

Residues 1-56 form a disordered region; it reads MRSGAERRGSSAAASPGSPPPGRARPAGSDAPSALPPPAAGQPRARDSGDVRSQPR. Phosphoserine occurs at positions 10, 15, and 18. The segment covering 24–33 has biased composition (low complexity); it reads ARPAGSDAPS. Positions 93–353 constitute a Protein kinase domain; it reads FQILRAIGKG…LQDVQAAPAL (261 aa). Residues 99-107 and K122 contribute to the ATP site; that span reads IGKGSFGKV. D216 acts as the Proton acceptor in catalysis. The span at 396–405 shows a compositional bias: basic residues; that stretch reads HKKKKRLAKN. Disordered stretches follow at residues 396–419 and 444–486; these read HKKK…QSEN and SQDL…AGSG.

Belongs to the protein kinase superfamily. Ser/Thr protein kinase family. Requires Mg(2+) as cofactor.

The catalysed reaction is L-seryl-[protein] + ATP = O-phospho-L-seryl-[protein] + ADP + H(+). The enzyme catalyses L-threonyl-[protein] + ATP = O-phospho-L-threonyl-[protein] + ADP + H(+). This Homo sapiens (Human) protein is Serine/threonine-protein kinase 32C.